Consider the following 293-residue polypeptide: Homoserine kinase (293 aa).

84 to 94 (PLSRGLGSSSA) contributes to the ATP binding site.

This sequence belongs to the GHMP kinase family. Homoserine kinase subfamily.

It localises to the cytoplasm. The enzyme catalyses L-homoserine + ATP = O-phospho-L-homoserine + ADP + H(+). It functions in the pathway amino-acid biosynthesis; L-threonine biosynthesis; L-threonine from L-aspartate: step 4/5. Catalyzes the ATP-dependent phosphorylation of L-homoserine to L-homoserine phosphate. This is Homoserine kinase from Nautilia profundicola (strain ATCC BAA-1463 / DSM 18972 / AmH).